A 151-amino-acid polypeptide reads, in one-letter code: UPF0178 protein YaiI (151 aa).

This sequence belongs to the UPF0178 family.

This is UPF0178 protein YaiI from Salmonella agona (strain SL483).